The following is a 1536-amino-acid chain: Alpha-2-macroglobulin (1536 aa).

The first 23 residues, Met1–Ala23, serve as a signal peptide directing secretion. The isoglutamyl cysteine thioester (Cys-Gln) cross-link spans Cys919 to Gln922.

This sequence belongs to the protease inhibitor I39 (alpha-2-macroglobulin) family. Bacterial alpha-2-macroglobulin subfamily.

Protects the bacterial cell from peptidases. This Thermotoga maritima (strain ATCC 43589 / DSM 3109 / JCM 10099 / NBRC 100826 / MSB8) protein is Alpha-2-macroglobulin.